A 64-amino-acid chain; its full sequence is Frontoxin IV (64 aa).

Cystine bridges form between C3–C24, C6–C11, C17–C41, C45–C57, and C58–C63.

Expressed by the venom gland.

It is found in the secreted. Produces peripheral paralysis by blocking neuromuscular transmission at the postsynaptic site. Binds to the muscular nicotinic acetylcholine receptor (nAChR). The sequence is that of Frontoxin IV from Micrurus frontalis (Coral snake).